Consider the following 523-residue polypeptide: 2-isopropylmalate synthase (523 aa).

The region spanning 5-267 (VIIFDTTLRD…HTNINHHEIW (263 aa)) is the Pyruvate carboxyltransferase domain. Mn(2+) contacts are provided by Asp14, His202, His204, and Asn238. The segment at 392–523 (RLDYFSVQSG…QNKENNKETV (132 aa)) is regulatory domain.

The protein belongs to the alpha-IPM synthase/homocitrate synthase family. LeuA type 1 subfamily. As to quaternary structure, homodimer. Mn(2+) serves as cofactor.

The protein resides in the cytoplasm. The enzyme catalyses 3-methyl-2-oxobutanoate + acetyl-CoA + H2O = (2S)-2-isopropylmalate + CoA + H(+). The protein operates within amino-acid biosynthesis; L-leucine biosynthesis; L-leucine from 3-methyl-2-oxobutanoate: step 1/4. Functionally, catalyzes the condensation of the acetyl group of acetyl-CoA with 3-methyl-2-oxobutanoate (2-ketoisovalerate) to form 3-carboxy-3-hydroxy-4-methylpentanoate (2-isopropylmalate). This is 2-isopropylmalate synthase from Salmonella paratyphi A (strain ATCC 9150 / SARB42).